The primary structure comprises 144 residues: Putative lipoprotein MAH_0816 (144 aa).

The N-terminal stretch at 1-24 (MRWPMQNRTTAVIAVALATTALVA) is a signal peptide. The N-palmitoyl cysteine moiety is linked to residue cysteine 25. A lipid anchor (S-diacylglycerol cysteine) is attached at cysteine 25.

This sequence belongs to the mycobacterial 19 kDa antigen family.

Its subcellular location is the cell membrane. In Mycobacterium avium subsp. hominissuis (strain TH135), this protein is Putative lipoprotein MAH_0816.